The primary structure comprises 564 residues: Ribulokinase (564 aa).

It belongs to the ribulokinase family.

It carries out the reaction D-ribulose + ATP = D-ribulose 5-phosphate + ADP + H(+). The catalysed reaction is L-ribulose + ATP = L-ribulose 5-phosphate + ADP + H(+). Its pathway is carbohydrate degradation; L-arabinose degradation via L-ribulose; D-xylulose 5-phosphate from L-arabinose (bacterial route): step 2/3. The polypeptide is Ribulokinase (Anoxybacillus flavithermus (strain DSM 21510 / WK1)).